A 436-amino-acid polypeptide reads, in one-letter code: Ribulose bisphosphate carboxylase large chain (436 aa).

Residues Asn-104 and Thr-154 each coordinate substrate. The active-site Proton acceptor is the Lys-156. Position 158 (Lys-158) interacts with substrate. Lys-182, Asp-184, and Glu-185 together coordinate Mg(2+). The residue at position 182 (Lys-182) is an N6-carboxylysine. His-275 serves as the catalytic Proton acceptor. Positions 276, 308, and 360 each coordinate substrate.

Belongs to the RuBisCO large chain family. Type I subfamily. Heterohexadecamer of 8 large chains and 8 small chains; disulfide-linked. The disulfide link is formed within the large subunit homodimers. It depends on Mg(2+) as a cofactor. The disulfide bond which can form in the large chain dimeric partners within the hexadecamer appears to be associated with oxidative stress and protein turnover.

It is found in the plastid. The protein localises to the chloroplast. It catalyses the reaction 2 (2R)-3-phosphoglycerate + 2 H(+) = D-ribulose 1,5-bisphosphate + CO2 + H2O. It carries out the reaction D-ribulose 1,5-bisphosphate + O2 = 2-phosphoglycolate + (2R)-3-phosphoglycerate + 2 H(+). Functionally, ruBisCO catalyzes two reactions: the carboxylation of D-ribulose 1,5-bisphosphate, the primary event in carbon dioxide fixation, as well as the oxidative fragmentation of the pentose substrate in the photorespiration process. Both reactions occur simultaneously and in competition at the same active site. The sequence is that of Ribulose bisphosphate carboxylase large chain from Euglena geniculata.